The primary structure comprises 248 residues: Ribonuclease PH (248 aa).

Residues Arg-86 and 124-126 (GTR) each bind phosphate.

Belongs to the RNase PH family. In terms of assembly, homohexameric ring arranged as a trimer of dimers.

It carries out the reaction tRNA(n+1) + phosphate = tRNA(n) + a ribonucleoside 5'-diphosphate. Phosphorolytic 3'-5' exoribonuclease that plays an important role in tRNA 3'-end maturation. Removes nucleotide residues following the 3'-CCA terminus of tRNAs; can also add nucleotides to the ends of RNA molecules by using nucleoside diphosphates as substrates, but this may not be physiologically important. Probably plays a role in initiation of 16S rRNA degradation (leading to ribosome degradation) during starvation. The chain is Ribonuclease PH from Clostridium perfringens (strain ATCC 13124 / DSM 756 / JCM 1290 / NCIMB 6125 / NCTC 8237 / Type A).